A 452-amino-acid chain; its full sequence is Digeranylgeranylglycerophospholipid reductase (452 aa).

FAD-binding positions include 15–16, 35–36, and 45–50; these read FA, DS, and KPCGDA. His-55 contacts a 2,3-bis-O-phytanyl-sn-glycerol 1-phospholipid. FAD contacts are provided by Ala-122 and Asp-288. His-297 provides a ligand contact to a 2,3-bis-O-phytanyl-sn-glycerol 1-phospholipid. FAD is bound at residue 300–301; sequence GK. Cys-310 and Cys-335 form a disulfide bridge. Tyr-340 contacts a 2,3-bis-O-phytanyl-sn-glycerol 1-phospholipid.

Belongs to the geranylgeranyl reductase family. As to quaternary structure, monomer. Requires FAD as cofactor.

It catalyses the reaction a 2,3-bis-O-phytanyl-sn-glycerol 1-phospholipid + 8 A = a 2,3-bis-O-(geranylgeranyl)-sn-glycerol 1-phospholipid + 8 AH2. It carries out the reaction 2,3-bis-O-(phytanyl)-sn-glycerol 1-phosphate + 8 A = 2,3-bis-O-(geranylgeranyl)-sn-glycerol 1-phosphate + 8 AH2. The enzyme catalyses sn-3-O-phytanylglycerol 1-phosphate + 4 A = sn-3-O-(geranylgeranyl)glycerol 1-phosphate + 4 AH2. The catalysed reaction is phytyl diphosphate + 3 A = (2E,6E,10E)-geranylgeranyl diphosphate + 3 AH2. The protein operates within membrane lipid metabolism; glycerophospholipid metabolism. Its function is as follows. Is involved in the reduction of 2,3-digeranylgeranylglycerophospholipids (unsaturated archaeols) into 2,3-diphytanylglycerophospholipids (saturated archaeols) in the biosynthesis of archaeal membrane lipids. Catalyzes the formation of archaetidic acid (2,3-di-O-phytanyl-sn-glyceryl phosphate) from 2,3-di-O-geranylgeranylglyceryl phosphate (DGGGP) via the hydrogenation of each double bond of the isoprenoid chains. Is not active with NADPH or NADH as an electron donor; the physiological reducing agent is unknown. Is also active on the more upstream precursors of membrane lipid biosynthesis, catalyzing the complete reduction of 3-O-geranylgeranylglyceryl phosphate (GGGP) to 3-O-phytanylglyceryl phosphate, and the partial reduction of geranylgeranyl diphosphate (GGPP) to phytyl diphosphate, thus reducing three of four GGPP double bonds and preserving the allylic double bond (at position 2). This reaction product is a reactive prenyl donor, which can be used as a substrate by archaeal prenyltransferases such as GGGP synthases. The protein is Digeranylgeranylglycerophospholipid reductase of Sulfolobus acidocaldarius (strain ATCC 33909 / DSM 639 / JCM 8929 / NBRC 15157 / NCIMB 11770).